The following is a 251-amino-acid chain: 3-deoxy-manno-octulosonate cytidylyltransferase (251 aa).

The protein belongs to the KdsB family.

The protein localises to the cytoplasm. The enzyme catalyses 3-deoxy-alpha-D-manno-oct-2-ulosonate + CTP = CMP-3-deoxy-beta-D-manno-octulosonate + diphosphate. Its pathway is nucleotide-sugar biosynthesis; CMP-3-deoxy-D-manno-octulosonate biosynthesis; CMP-3-deoxy-D-manno-octulosonate from 3-deoxy-D-manno-octulosonate and CTP: step 1/1. The protein operates within bacterial outer membrane biogenesis; lipopolysaccharide biosynthesis. Activates KDO (a required 8-carbon sugar) for incorporation into bacterial lipopolysaccharide in Gram-negative bacteria. The polypeptide is 3-deoxy-manno-octulosonate cytidylyltransferase (Brucella abortus (strain 2308)).